The chain runs to 1300 residues: Nephrocystin-3 (1300 aa).

Residues 82 to 183 (KNNEVASMQK…LQRLQAQGIQ (102 aa)) are a coiled coil. TPR repeat units follow at residues 443–476 (TMED…ICEL), 916–949 (ADLY…RETA), 958–991 (AQSL…SENA), 1000–1033 (AREL…RQKS), 1066–1099 (ARTL…RERV), 1108–1141 (AQSI…RRRA), 1150–1183 (AYTV…RQKS), 1192–1225 (ATAL…YEDS), and 1234–1267 (GETL…KETE). The segment at 1268-1288 (TSVLGAKAPSGHSSSGGDTYS) is disordered. A compositionally biased stretch (polar residues) spans 1278 to 1288 (GHSSSGGDTYS).

The protein resides in the cell projection. The protein localises to the cilium. In terms of biological role, required for normal ciliary development and function. Inhibits disheveled-1-induced canonical Wnt-signaling activity and may also play a role in the control of non-canonical Wnt signaling that regulates planar cell polarity. Probably acts as a molecular switch between different Wnt signaling pathways. Required for proper convergent extension cell movements. The polypeptide is Nephrocystin-3 (nphp3) (Xenopus laevis (African clawed frog)).